Consider the following 482-residue polypeptide: Putative dipeptidase NECHADRAFT_87110 (482 aa).

Polar residues predominate over residues 1–21 (MADTQTPNLQNTAEGDANTSA). The interval 1–24 (MADTQTPNLQNTAEGDANTSAENE) is disordered. An N-linked (GlcNAc...) asparagine glycan is attached at N18. Residues 41-61 (WLRYPFLVAGIALFLGPFSFF) traverse the membrane as a helical segment. Residues H90, D92, and E201 each coordinate Zn(2+). A disulfide bridge connects residues C141 and C230. Position 228 (H228) interacts with substrate. Positions 272 and 293 each coordinate Zn(2+). Positions 304 and 364 each coordinate substrate.

The protein belongs to the metallo-dependent hydrolases superfamily. Peptidase M19 family. Requires Zn(2+) as cofactor.

The protein localises to the membrane. It catalyses the reaction an L-aminoacyl-L-amino acid + H2O = 2 an L-alpha-amino acid. Hydrolyzes a wide range of dipeptides. This is Putative dipeptidase NECHADRAFT_87110 from Fusarium vanettenii (strain ATCC MYA-4622 / CBS 123669 / FGSC 9596 / NRRL 45880 / 77-13-4) (Fusarium solani subsp. pisi).